A 114-amino-acid chain; its full sequence is Protein U68 (114 aa).

The protein belongs to the herpesviridae UL96 family.

The protein is Protein U68 (U68) of Human herpesvirus 6A (strain Uganda-1102) (HHV-6 variant A).